Consider the following 431-residue polypeptide: Enolase (431 aa).

(2R)-2-phosphoglycerate is bound at residue Gln-167. Glu-209 serves as the catalytic Proton donor. 3 residues coordinate Mg(2+): Asp-246, Glu-290, and Asp-317. (2R)-2-phosphoglycerate-binding residues include Lys-342, Arg-371, Ser-372, and Lys-393. Lys-342 serves as the catalytic Proton acceptor.

The protein belongs to the enolase family. As to quaternary structure, component of the RNA degradosome, a multiprotein complex involved in RNA processing and mRNA degradation. The cofactor is Mg(2+).

The protein localises to the cytoplasm. Its subcellular location is the secreted. The protein resides in the cell surface. The enzyme catalyses (2R)-2-phosphoglycerate = phosphoenolpyruvate + H2O. Its pathway is carbohydrate degradation; glycolysis; pyruvate from D-glyceraldehyde 3-phosphate: step 4/5. In terms of biological role, catalyzes the reversible conversion of 2-phosphoglycerate (2-PG) into phosphoenolpyruvate (PEP). It is essential for the degradation of carbohydrates via glycolysis. The polypeptide is Enolase (Enterobacter sp. (strain 638)).